We begin with the raw amino-acid sequence, 503 residues long: Maturase K (503 aa).

The protein belongs to the intron maturase 2 family. MatK subfamily.

The protein localises to the plastid. Its subcellular location is the chloroplast. Functionally, usually encoded in the trnK tRNA gene intron. Probably assists in splicing its own and other chloroplast group II introns. This Rhamnus cathartica (Common buckthorn) protein is Maturase K.